A 252-amino-acid chain; its full sequence is Ubiquinone biosynthesis O-methyltransferase (252 aa).

S-adenosyl-L-methionine-binding residues include Arg-36, Gly-60, Asp-81, and Leu-123.

This sequence belongs to the methyltransferase superfamily. UbiG/COQ3 family.

It carries out the reaction a 3-demethylubiquinol + S-adenosyl-L-methionine = a ubiquinol + S-adenosyl-L-homocysteine + H(+). The catalysed reaction is a 3-(all-trans-polyprenyl)benzene-1,2-diol + S-adenosyl-L-methionine = a 2-methoxy-6-(all-trans-polyprenyl)phenol + S-adenosyl-L-homocysteine + H(+). The protein operates within cofactor biosynthesis; ubiquinone biosynthesis. Its function is as follows. O-methyltransferase that catalyzes the 2 O-methylation steps in the ubiquinone biosynthetic pathway. This chain is Ubiquinone biosynthesis O-methyltransferase, found in Rickettsia prowazekii (strain Madrid E).